We begin with the raw amino-acid sequence, 227 residues long: 2-heptyl-1-hydroxyquinolin-4(1H)-one methyltransferase (227 aa).

The protein belongs to the methyltransferase superfamily. In terms of assembly, monomer.

The protein localises to the cytoplasm. The enzyme catalyses 2-heptyl-1-hydroxy-4(1H)-quinolinone + S-adenosyl-L-methionine = 2-heptyl-1-methoxy-4(1H)-quinolinone + S-adenosyl-L-homocysteine + H(+). It carries out the reaction 3-bromo-2-heptyl-1-hydroxy-4(1H)-quinolinone + S-adenosyl-L-methionine = 3-bromo-2-heptyl-1-methoxy-4(1H)-quinolinone + S-adenosyl-L-homocysteine + H(+). In terms of biological role, involved in cellular response to chemical stress and may contribute to resistance toward antimicrobial natural compounds as well as drugs. Catalyzes the methylation and detoxification of the P.aeruginosa toxin 2-heptyl-1-hydroxy-4(1H)-quinolinone (HQNO) to 2-heptyl-1-methoxy-4(1H)-quinolinone (HMOQ). Can also methylate 3-bromo-2-heptyl-1-hydroxy-4(1H)-quinolinone, and shows much lower activity with 1-hydroxyquinolin-4(1H)-one, quercetin, 4-hydroxyquinolin-2(1H)-one (DHQ) and 4-hydroxyisoquinolin-1(2H)-one. The sequence is that of 2-heptyl-1-hydroxyquinolin-4(1H)-one methyltransferase from Mycobacteroides abscessus (strain ATCC 19977 / DSM 44196 / CCUG 20993 / CIP 104536 / JCM 13569 / NCTC 13031 / TMC 1543 / L948) (Mycobacterium abscessus).